The following is a 382-amino-acid chain: E3 ubiquitin-protein ligase RNF133 (382 aa).

In terms of domain architecture, PA spans 65 to 167 (SSILKRVAGV…IKGMEILHLI (103 aa)). A helical membrane pass occupies residues 190–210 (YFVSFMIVTTATLAYFTFYHI). The RING-type; atypical zinc finger occupies 256-297 (CVICFEAYKPNEIVRILTCKHFFHKNCIDPWILAHGTCPMCK). A disordered region spans residues 328-382 (TLSPVEEETNYELPPARTSSKVTHVQEHPTSSANAGSQPPEAEETSHPSHGQQVL). The segment covering 344-364 (RTSSKVTHVQEHPTSSANAGS) has biased composition (polar residues).

As to quaternary structure, interacts with E3 ligase UBE2J1. Post-translationally, auto-ubiquitinated. Expression is testis-specific.

The protein resides in the endoplasmic reticulum membrane. The enzyme catalyses S-ubiquitinyl-[E2 ubiquitin-conjugating enzyme]-L-cysteine + [acceptor protein]-L-lysine = [E2 ubiquitin-conjugating enzyme]-L-cysteine + N(6)-ubiquitinyl-[acceptor protein]-L-lysine.. It participates in protein modification; protein ubiquitination. Functionally, has E3 ubiquitin-protein ligase activity. Plays a role in male fecundity through the interaction with the E2 ubituitin-protein ligase UBE2J1. In Mus musculus (Mouse), this protein is E3 ubiquitin-protein ligase RNF133 (Rnf133).